Consider the following 251-residue polypeptide: 5'-nucleotidase SurE (251 aa).

The a divalent metal cation site is built by aspartate 8, aspartate 9, serine 39, and asparagine 95.

Belongs to the SurE nucleotidase family. A divalent metal cation is required as a cofactor.

It localises to the cytoplasm. It catalyses the reaction a ribonucleoside 5'-phosphate + H2O = a ribonucleoside + phosphate. Nucleotidase that shows phosphatase activity on nucleoside 5'-monophosphates. The sequence is that of 5'-nucleotidase SurE from Clostridium botulinum (strain Eklund 17B / Type B).